The primary structure comprises 190 residues: MKTGKELKPGTVIRIDNDPWLVQKAEFTKSGRNSAIMKTKLKNLLTGYKTETVYGADDKLDDVILDRKEATLSFISGDTYTFMDTTDYTMYELNAEDIEAVLPFIEEGMTDVCEAVFFEDRLVSVDLPTTIVRQVDYTEGSARGDTSGKVMKPAKLKNGTELSVADFIEIGDMIEIDTREGGSYKGRAKV.

This sequence belongs to the elongation factor P family.

The protein localises to the cytoplasm. Its pathway is protein biosynthesis; polypeptide chain elongation. Its function is as follows. Involved in peptide bond synthesis. Stimulates efficient translation and peptide-bond synthesis on native or reconstituted 70S ribosomes in vitro. Probably functions indirectly by altering the affinity of the ribosome for aminoacyl-tRNA, thus increasing their reactivity as acceptors for peptidyl transferase. This chain is Elongation factor P, found in Pseudomonas fluorescens (strain ATCC BAA-477 / NRRL B-23932 / Pf-5).